We begin with the raw amino-acid sequence, 128 residues long: MRYAIMVTGPAYGTQQASSALQFAHALLNEGHELASVFFYREGVYNANLLTSPASDEYDLVRAWQKLNTQHGVALNICVAAALRRGIIDETEAGRLELPSANLQPGFTLSGLGALAEASLTCDRVVQF.

The active-site Cysteine persulfide intermediate is C78.

The protein belongs to the DsrE/TusD family. In terms of assembly, heterohexamer, formed by a dimer of trimers. The hexameric TusBCD complex contains 2 copies each of TusB, TusC and TusD. The TusBCD complex interacts with TusE.

It is found in the cytoplasm. Part of a sulfur-relay system required for 2-thiolation of 5-methylaminomethyl-2-thiouridine (mnm(5)s(2)U) at tRNA wobble positions. Accepts sulfur from TusA and transfers it in turn to TusE. In Salmonella dublin (strain CT_02021853), this protein is Sulfurtransferase TusD.